The chain runs to 105 residues: Nucleoid-associated protein Dred_0043 (105 aa).

This sequence belongs to the YbaB/EbfC family. Homodimer.

It localises to the cytoplasm. Its subcellular location is the nucleoid. In terms of biological role, binds to DNA and alters its conformation. May be involved in regulation of gene expression, nucleoid organization and DNA protection. In Desulforamulus reducens (strain ATCC BAA-1160 / DSM 100696 / MI-1) (Desulfotomaculum reducens), this protein is Nucleoid-associated protein Dred_0043.